Reading from the N-terminus, the 231-residue chain is Probable intron-encoded endonuclease 1 (231 aa).

This sequence belongs to the LAGLIDADG endonuclease family.

It is found in the mitochondrion. In terms of biological role, endonuclease involved in mitochondrial 21S rRNA gene intron homing. In Wickerhamomyces canadensis (Yeast), this protein is Probable intron-encoded endonuclease 1.